Consider the following 533-residue polypeptide: Flavin-containing monooxygenase 5 (533 aa).

The residue at position 5 (R5) is a Dimethylated arginine. Residues 10-14 (GGGVS), E33, and 41-42 (LW) contribute to the FAD site. The residue at position 54 (S54) is a Phosphoserine. Y56 carries the post-translational modification Phosphotyrosine. S58 carries the phosphoserine modification. FAD is bound at residue 62 to 63 (NT). 196 to 199 (SGGD) is a binding site for NADP(+). S280 is modified (phosphoserine). Residue T284 is modified to Phosphothreonine. The residue at position 401 (S401) is a Phosphoserine. The chain crosses the membrane as a helical span at residues 513 to 533 (TMTIGKFMLALAFFAIIIAYF).

Belongs to the FMO family. Requires FAD as cofactor. As to expression, expressed in fetal and adult liver.

The protein localises to the microsome membrane. Its subcellular location is the endoplasmic reticulum membrane. It catalyses the reaction N,N-dimethylaniline + NADPH + O2 + H(+) = N,N-dimethylaniline N-oxide + NADP(+) + H2O. It carries out the reaction NADPH + O2 + H(+) = H2O2 + NADP(+). The catalysed reaction is heptan-2-one + NADPH + O2 + H(+) = pentyl acetate + NADP(+) + H2O. The enzyme catalyses octan-3-one + NADPH + O2 + H(+) = pentyl propanoate + NADP(+) + H2O. It catalyses the reaction octan-3-one + NADPH + O2 + H(+) = ethyl hexanoate + NADP(+) + H2O. It carries out the reaction hexan-3-one + NADPH + O2 + H(+) = ethyl butanoate + NADP(+) + H2O. The catalysed reaction is hexan-3-one + NADPH + O2 + H(+) = propyl propanoate + NADP(+) + H2O. The enzyme catalyses heptan-4-one + NADPH + O2 + H(+) = propyl butanoate + NADP(+) + H2O. It catalyses the reaction (2E)-geranial + NADPH + O2 + H(+) = (1E)-2,6-dimethylhepta-1,5-dien-1-yl formate + NADP(+) + H2O. It carries out the reaction sulcatone + NADPH + O2 + H(+) = 4-methylpent-3-en-1-yl acetate + NADP(+) + H2O. Its function is as follows. Acts as a Baeyer-Villiger monooxygenase on a broad range of substrates. Catalyzes the insertion of an oxygen atom into a carbon-carbon bond adjacent to a carbonyl, which converts ketones to esters. Active on diverse carbonyl compounds, whereas soft nucleophiles are mostly non- or poorly reactive. In contrast with other forms of FMO it is non- or poorly active on 'classical' substrates such as drugs, pesticides, and dietary components containing soft nucleophilic heteroatoms. Able to oxidize drug molecules bearing a carbonyl group on an aliphatic chain, such as nabumetone and pentoxifylline. Also, in the absence of substrates, shows slow but yet significant NADPH oxidase activity. Acts as a positive modulator of cholesterol biosynthesis as well as glucose homeostasis, promoting metabolic aging via pleiotropic effects. The protein is Flavin-containing monooxygenase 5 of Homo sapiens (Human).